The sequence spans 309 residues: GTP cyclohydrolase MptA (309 aa).

The protein belongs to the GTP cyclohydrolase IV family. Homodimer. Fe(2+) serves as cofactor.

It catalyses the reaction GTP + H2O = 7,8-dihydroneopterin 2',3'-cyclic phosphate + formate + diphosphate + H(+). It functions in the pathway cofactor biosynthesis; 5,6,7,8-tetrahydromethanopterin biosynthesis. In terms of biological role, converts GTP to 7,8-dihydro-D-neopterin 2',3'-cyclic phosphate, the first intermediate in the biosynthesis of coenzyme methanopterin. This chain is GTP cyclohydrolase MptA, found in Haloquadratum walsbyi (strain DSM 16790 / HBSQ001).